The primary structure comprises 301 residues: Lipoyl synthase (301 aa).

[4Fe-4S] cluster is bound by residues C50, C55, C61, C76, C80, C83, and S289. In terms of domain architecture, Radical SAM core spans 62 to 278 (WNHRTATFLL…RRYALERGFR (217 aa)).

The protein belongs to the radical SAM superfamily. Lipoyl synthase family. The cofactor is [4Fe-4S] cluster.

The protein resides in the cytoplasm. The enzyme catalyses [[Fe-S] cluster scaffold protein carrying a second [4Fe-4S](2+) cluster] + N(6)-octanoyl-L-lysyl-[protein] + 2 oxidized [2Fe-2S]-[ferredoxin] + 2 S-adenosyl-L-methionine + 4 H(+) = [[Fe-S] cluster scaffold protein] + N(6)-[(R)-dihydrolipoyl]-L-lysyl-[protein] + 4 Fe(3+) + 2 hydrogen sulfide + 2 5'-deoxyadenosine + 2 L-methionine + 2 reduced [2Fe-2S]-[ferredoxin]. It functions in the pathway protein modification; protein lipoylation via endogenous pathway; protein N(6)-(lipoyl)lysine from octanoyl-[acyl-carrier-protein]: step 2/2. Functionally, catalyzes the radical-mediated insertion of two sulfur atoms into the C-6 and C-8 positions of the octanoyl moiety bound to the lipoyl domains of lipoate-dependent enzymes, thereby converting the octanoylated domains into lipoylated derivatives. The chain is Lipoyl synthase from Roseiflexus sp. (strain RS-1).